The primary structure comprises 149 residues: Deoxyuridine 5'-triphosphate nucleotidohydrolase (149 aa).

Residues 68 to 70 (RSG), N81, 85 to 87 (LID), and M95 each bind substrate.

The protein belongs to the dUTPase family. It depends on Mg(2+) as a cofactor.

The enzyme catalyses dUTP + H2O = dUMP + diphosphate + H(+). The protein operates within pyrimidine metabolism; dUMP biosynthesis; dUMP from dCTP (dUTP route): step 2/2. Functionally, this enzyme is involved in nucleotide metabolism: it produces dUMP, the immediate precursor of thymidine nucleotides and it decreases the intracellular concentration of dUTP so that uracil cannot be incorporated into DNA. The polypeptide is Deoxyuridine 5'-triphosphate nucleotidohydrolase (Herminiimonas arsenicoxydans).